The sequence spans 469 residues: Glutamate--tRNA ligase 1 (469 aa).

The short motif at 11 to 21 (PSPTGHLHLGG) is the 'HIGH' region element. The short motif at 238-242 (KLSKR) is the 'KMSKS' region element. K241 contacts ATP.

The protein belongs to the class-I aminoacyl-tRNA synthetase family. Glutamate--tRNA ligase type 1 subfamily. Monomer.

It localises to the cytoplasm. The enzyme catalyses tRNA(Glu) + L-glutamate + ATP = L-glutamyl-tRNA(Glu) + AMP + diphosphate. In terms of biological role, catalyzes the attachment of glutamate to tRNA(Glu) in a two-step reaction: glutamate is first activated by ATP to form Glu-AMP and then transferred to the acceptor end of tRNA(Glu). In Ehrlichia canis (strain Jake), this protein is Glutamate--tRNA ligase 1.